Consider the following 154-residue polypeptide: Egg-lysin (154 aa).

A signal peptide spans 1–18 (MKLLVLCIFAMMATLAMS).

As to quaternary structure, homodimer. In terms of tissue distribution, sperm.

Dissolves the egg vitelline layer nonenzymatically during fertilization. It creates a hole of about 3 mu-m in diameter through which the sperm pass. This is Egg-lysin from Haliotis walallensis (Flat abalone).